A 214-amino-acid polypeptide reads, in one-letter code: Lazarillo protein (214 aa).

Positions 1-21 (MIRRGLLSVTAALVLLSVSCS) are cleaved as a signal peptide. N-linked (GlcNAc...) asparagine glycans are attached at residues asparagine 38, asparagine 74, asparagine 84, asparagine 90, asparagine 130, asparagine 158, and asparagine 161. Residue alanine 192 is the site of GPI-anchor amidated alanine attachment. A propeptide spans 193 to 214 (GAEHVVGAMLSVAIASLFALLH) (removed in mature form).

It belongs to the calycin superfamily. Lipocalin family. Post-translationally, N-glycosylated. In terms of processing, contains disulfide bonds. Expressed by a subset of neuroblasts, ganglion mother cells and neurons of the CNS; by all sensory neurons of the PNS.

It localises to the cell membrane. Its function is as follows. Putative role in axonal outgrowth and guidance, required for the navigation of identified commissural neurons. Could be a receptor the midline morphogen. The protein is Lazarillo protein of Schistocerca americana (American grasshopper).